A 147-amino-acid polypeptide reads, in one-letter code: Bis(5'-nucleosyl)-tetraphosphatase [asymmetrical] (147 aa).

The residue at position 2 (A2) is an N-acetylalanine. The Nudix hydrolase domain occupies 2-139 (ALRACGLIIF…EMKAALQEGH (138 aa)). The short motif at 43–64 (GHVEPGESDLETALRETQEEAG) is the Nudix box element.

The protein belongs to the Nudix hydrolase family. A divalent metal cation serves as cofactor.

It catalyses the reaction P(1),P(4)-bis(5'-guanosyl) tetraphosphate + H2O = GMP + GTP + 2 H(+). The catalysed reaction is a 5'-end CoA-ribonucleoside in mRNA + H2O = a 5'-end phospho-adenosine-phospho-ribonucleoside in mRNA + (R)-4'-phosphopantetheine + 2 H(+). The enzyme catalyses a 5'-end FAD-phospho-ribonucleoside in mRNA + H2O = a 5'-end phospho-adenosine-phospho-ribonucleoside in mRNA + FMN + 2 H(+). Its function is as follows. Catalyzes the asymmetric hydrolysis of diadenosine 5',5'''-P1,P4-tetraphosphate (Ap4A) to yield AMP and ATP. Exhibits decapping activity towards FAD-capped RNAs and dpCoA-capped RNAs in vitro. The chain is Bis(5'-nucleosyl)-tetraphosphatase [asymmetrical] (NUDT2) from Bos taurus (Bovine).